The primary structure comprises 371 residues: MAQKGIGVSNLPNVKYRSFCKAGIDFNIMTVGSNGLGKSSFINQMLGDSILSSDPFLKPEDGHHSNETVRALDEDIVDDPESKYFHRNSLINIQISKFFVMENDFQTRVTVTEVDGVGDGVCNEGCWDPIVELIQDNFRDYLDQERKNVRSLIKDKRIHICLYFLEPNPSHVSLVDIRTMKEISKICNLIPVVGKSDLLSDSEREECRNRIVEVLSMENIDVFRLDILEKEKISRTESPFFIIAKNVNSGDSSGHNREYPWGTMFPEKVESNDFYFLVDSLIAKNLIRLVETTEVFYDEYKTREIGLSIASKPGALGEDDRRLTKEIQKKIKEDERTIVELRQKLIEKRKYYESKMLEITSKYSNEKINSS.

The region spanning 22–307 (AGIDFNIMTV…DEYKTREIGL (286 aa)) is the Septin-type G domain. Residues 32-39 (GSNGLGKS) form a G1 motif region. Residues 32–39 (GSNGLGKS), glycine 116, 195–203 (KSDLLSDSE), and arginine 257 contribute to the GTP site. Residues 113–116 (EVDG) form a G3 motif region. A G4 motif region spans residues 194–197 (GKSD).

This sequence belongs to the TRAFAC class TrmE-Era-EngA-EngB-Septin-like GTPase superfamily. Septin GTPase family. Component of the septin complex.

In terms of biological role, septins are GTPases involved in cytokinesis. The septins localize to the site of cleavage and act as a structural scaffold that recruits different components involved in diverse processes at specific stages during the cell cycle. Septins are also involved in cell morphogenesis, chitin deposition, cell cycle regulation, cell compartmentalization and spore wall formation. This is Cell division control protein 3 (CDC3) from Encephalitozoon cuniculi (strain GB-M1) (Microsporidian parasite).